We begin with the raw amino-acid sequence, 286 residues long: Shikimate dehydrogenase (NADP(+)) (286 aa).

Residues 19–21 (SLS) and Thr66 contribute to the shikimate site. Catalysis depends on Lys70, which acts as the Proton acceptor. Asn91 and Asp107 together coordinate shikimate. NADP(+)-binding positions include 129-133 (GSGGA) and Leu229. Tyr231 is a binding site for shikimate. Gly252 is a binding site for NADP(+).

Belongs to the shikimate dehydrogenase family. Homodimer.

It catalyses the reaction shikimate + NADP(+) = 3-dehydroshikimate + NADPH + H(+). The protein operates within metabolic intermediate biosynthesis; chorismate biosynthesis; chorismate from D-erythrose 4-phosphate and phosphoenolpyruvate: step 4/7. In terms of biological role, involved in the biosynthesis of the chorismate, which leads to the biosynthesis of aromatic amino acids. Catalyzes the reversible NADPH linked reduction of 3-dehydroshikimate (DHSA) to yield shikimate (SA). The sequence is that of Shikimate dehydrogenase (NADP(+)) from Prochlorococcus marinus (strain MIT 9215).